The sequence spans 200 residues: Recombination protein RecR (200 aa).

The C4-type zinc-finger motif lies at 58 to 73; sequence CQVCGNMDTENICGIC. The 96-residue stretch at 81–176 folds into the Toprim domain; sequence SVIAIVETVA…KISRLASGIP (96 aa).

The protein belongs to the RecR family.

In terms of biological role, may play a role in DNA repair. It seems to be involved in an RecBC-independent recombinational process of DNA repair. It may act with RecF and RecO. The polypeptide is Recombination protein RecR (Rickettsia bellii (strain OSU 85-389)).